The sequence spans 344 residues: MSNTVLVSGASGFIALHILSQLLKQDYKVIGTVRSHEKEAKLLRQFQHNPNLTLEIVPDISHPNAFDKVLQKRGREIRYVLHTASPFHYDTTEYEKDLLIPALEGTKNILNSIKKYAADTVERVVVTSSCTAIITLAKMDDPSVVFTEESWNEATWESCQIDGINAYFASKKFAEKAAWEFTKENEDHIKFKLTTVNPSLLFGPQLFDEDVHGHLNTSCEMINGLIHTPVNASVPDFHSIFIDVRDVALAHLYAFQKENTAGKRLVVTNGKFGNQDILDILNEDFPQLRGLIPLGKPGTGDQVIDRGSTTDNSATRKILGFEFRSLHESVHDTAAQILKKQNRL.

The NADP(+) site is built by Lys-38 and Tyr-167.

The protein belongs to the NAD(P)-dependent epimerase/dehydratase family. Dihydroflavonol-4-reductase subfamily.

This is an uncharacterized protein from Saccharomyces cerevisiae (strain ATCC 204508 / S288c) (Baker's yeast).